Reading from the N-terminus, the 301-residue chain is uncharacterized protein (301 aa).

This is an uncharacterized protein from Escherichia coli (strain K12).